Reading from the N-terminus, the 79-residue chain is Translational regulator CsrA (79 aa).

It belongs to the CsrA/RsmA family. Homodimer; the beta-strands of each monomer intercalate to form a hydrophobic core, while the alpha-helices form wings that extend away from the core.

The protein localises to the cytoplasm. Functionally, a translational regulator that binds mRNA to regulate translation initiation and/or mRNA stability. Usually binds in the 5'-UTR at or near the Shine-Dalgarno sequence preventing ribosome-binding, thus repressing translation. Its main target seems to be the major flagellin gene, while its function is anatagonized by FliW. The sequence is that of Translational regulator CsrA from Geobacter sulfurreducens (strain ATCC 51573 / DSM 12127 / PCA).